A 497-amino-acid chain; its full sequence is Protein FAM114A2 (497 aa).

Positions 1–54 (MSDKDPPESPVVTGVASTLKDENCEPVEKPEDKSQPVVSTRKRPETKPSSDLEA) are disordered. Positions 19 to 34 (LKDENCEPVEKPEDKS) are enriched in basic and acidic residues. Phosphoserine occurs at positions 84 and 205. The tract at residues 344 to 364 (VAEKEEGEKESEAGNTEEAQK) is disordered.

It belongs to the FAM114 family.

The protein is Protein FAM114A2 (Fam114a2) of Mus musculus (Mouse).